The following is a 418-amino-acid chain: Beta-arrestin-1 (418 aa).

Residues methionine 1–serine 163 are interaction with SRC. The segment at proline 45 to serine 86 is interaction with CHRM2. At tyrosine 47 the chain carries Phosphotyrosine. The 1D-myo-inositol hexakisphosphate site is built by lysine 250, methionine 255, lysine 324, and lysine 326. The interaction with TRAF6 stretch occupies residues isoleucine 318–arginine 418. Disordered regions lie at residues histidine 353–threonine 374 and lysine 397–arginine 418. The segment covering lysine 355 to proline 366 has biased composition (basic and acidic residues). Position 412 is a phosphoserine (serine 412). Residue serine 412 is modified to Phosphoserine; by GRK5.

The protein belongs to the arrestin family. Monomer. Homodimer. Homooligomer; the self-association is mediated by InsP6-binding. Heterooligomer with ARRB2; the association is mediated by InsP6-binding. Interacts with ADRB2 (phosphorylated). Interacts with CHRM2 (phosphorylated). Interacts with LHCGR. Interacts with CYTH2 and CASR. Interacts with AP2B1 (dephosphorylated at 'Tyr-737'); phosphorylation of AP2B1 at 'Tyr-737' disrupts the interaction. Interacts (dephosphorylated at Ser-412) with CLTC. Interacts with CCR2 and GRK2. Interacts with CRR5. Interacts with PTAFR (phosphorylated on serine residues). Interacts with CLTC and MAP2K3. Interacts with CREB1. Interacts with TRAF6. Interacts with IGF1R and MDM2. Interacts with C5AR1. Interacts with PDE4D. Interacts with SRC (via the SH3 domain and the protein kinase domain); the interaction is independent of the phosphorylation state of SRC C-terminus. Interacts with TACR1. Interacts with RAF1. Interacts with CHUK, IKBKB and MAP3K14. Interacts with DVL1; the interaction is enhanced by phosphorylation of DVL1. Interacts with DVL2; the interaction is enhanced by phosphorylation of DVL2. Interacts with IGF1R. Associates with MAP kinase p38. Part of a MAPK signaling complex consisting of TACR1, ARRB1, SRC, MAPK1 (activated) and MAPK3 (activated). Part of a MAPK signaling complex consisting of F2RL1, ARRB1, RAF1, MAPK1 (activated) and MAPK3 (activated). Interacts with GPR143. Interacts with MAP2K4/MKK4. Interacts with HCK and CXCR1 (phosphorylated). Interacts with ACKR3 and ACKR4. Interacts with ARRDC1; the interaction is direct. Interacts with GPR61, GPR62 and GPR135. Post-translationally, constitutively phosphorylated at Ser-412 in the cytoplasm. At the plasma membrane, is rapidly dephosphorylated, a process that is required for clathrin binding and beta-2 adrenergic receptor/ADRB2 endocytosis but not for ADRB2 binding and desensitization. Once internalized, is rephosphorylated. The ubiquitination status appears to regulate the formation and trafficking of beta-arrestin-GPCR complexes and signaling. Ubiquitination appears to occur GPCR-specific. Ubiquitinated by MDM2; the ubiquitination is required for rapid internalization of ADRB2. Deubiquitinated by USP33; the deubiquitination leads to a dissociation of the beta-arrestin-GPCR complex. Stimulation of a class A GPCR, such as ADRB2, induces transient ubiquitination and subsequently promotes association with USP33. In terms of tissue distribution, predominantly localized in neuronal tissues and in the spleen.

It is found in the cytoplasm. The protein localises to the nucleus. The protein resides in the cell membrane. Its subcellular location is the membrane. It localises to the clathrin-coated pit. It is found in the cell projection. The protein localises to the pseudopodium. The protein resides in the cytoplasmic vesicle. Functions in regulating agonist-mediated G-protein coupled receptor (GPCR) signaling by mediating both receptor desensitization and resensitization processes. During homologous desensitization, beta-arrestins bind to the GPRK-phosphorylated receptor and sterically preclude its coupling to the cognate G-protein; the binding appears to require additional receptor determinants exposed only in the active receptor conformation. The beta-arrestins target many receptors for internalization by acting as endocytic adapters (CLASPs, clathrin-associated sorting proteins) and recruiting the GPRCs to the adapter protein 2 complex 2 (AP-2) in clathrin-coated pits (CCPs). However, the extent of beta-arrestin involvement appears to vary significantly depending on the receptor, agonist and cell type. Internalized arrestin-receptor complexes traffic to intracellular endosomes, where they remain uncoupled from G-proteins. Two different modes of arrestin-mediated internalization occur. Class A receptors, like ADRB2, OPRM1, ENDRA, D1AR and ADRA1B dissociate from beta-arrestin at or near the plasma membrane and undergo rapid recycling. Class B receptors, like AVPR2, AGTR1, NTSR1, TRHR and TACR1 internalize as a complex with arrestin and traffic with it to endosomal vesicles, presumably as desensitized receptors, for extended periods of time. Receptor resensitization then requires that receptor-bound arrestin is removed so that the receptor can be dephosphorylated and returned to the plasma membrane. Involved in internalization of P2RY4 and UTP-stimulated internalization of P2RY2. Involved in phosphorylation-dependent internalization of OPRD1 ands subsequent recycling. Involved in the degradation of cAMP by recruiting cAMP phosphodiesterases to ligand-activated receptors. Beta-arrestins function as multivalent adapter proteins that can switch the GPCR from a G-protein signaling mode that transmits short-lived signals from the plasma membrane via small molecule second messengers and ion channels to a beta-arrestin signaling mode that transmits a distinct set of signals that are initiated as the receptor internalizes and transits the intracellular compartment. Acts as a signaling scaffold for MAPK pathways such as MAPK1/3 (ERK1/2). ERK1/2 activated by the beta-arrestin scaffold is largely excluded from the nucleus and confined to cytoplasmic locations such as endocytic vesicles, also called beta-arrestin signalosomes. Recruits c-Src/SRC to ADRB2 resulting in ERK activation. GPCRs for which the beta-arrestin-mediated signaling relies on both ARRB1 and ARRB2 (codependent regulation) include ADRB2, F2RL1 and PTH1R. For some GPCRs the beta-arrestin-mediated signaling relies on either ARRB1 or ARRB2 and is inhibited by the other respective beta-arrestin form (reciprocal regulation). Inhibits ERK1/2 signaling in AGTR1- and AVPR2-mediated activation (reciprocal regulation). Is required for SP-stimulated endocytosis of NK1R and recruits c-Src/SRC to internalized NK1R resulting in ERK1/2 activation, which is required for the antiapoptotic effects of SP. Is involved in proteinase-activated F2RL1-mediated ERK activity. Acts as a signaling scaffold for the AKT1 pathway. Is involved in alpha-thrombin-stimulated AKT1 signaling. Is involved in IGF1-stimulated AKT1 signaling leading to increased protection from apoptosis. Involved in activation of the p38 MAPK signaling pathway and in actin bundle formation. Involved in F2RL1-mediated cytoskeletal rearrangement and chemotaxis. Involved in AGTR1-mediated stress fiber formation by acting together with GNAQ to activate RHOA. Appears to function as signaling scaffold involved in regulation of MIP-1-beta-stimulated CCR5-dependent chemotaxis. Involved in attenuation of NF-kappa-B-dependent transcription in response to GPCR or cytokine stimulation by interacting with and stabilizing CHUK. May serve as nuclear messenger for GPCRs. Involved in OPRD1-stimulated transcriptional regulation by translocating to CDKN1B and FOS promoter regions and recruiting EP300 resulting in acetylation of histone H4. Involved in regulation of LEF1 transcriptional activity via interaction with DVL1 and/or DVL2 Also involved in regulation of receptors other than GPCRs. Involved in Toll-like receptor and IL-1 receptor signaling through the interaction with TRAF6 which prevents TRAF6 autoubiquitination and oligomerization required for activation of NF-kappa-B and JUN. Binds phosphoinositides. Binds inositolhexakisphosphate (InsP6). Involved in IL8-mediated granule release in neutrophils. Required for atypical chemokine receptor ACKR2-induced RAC1-LIMK1-PAK1-dependent phosphorylation of cofilin (CFL1) and for the up-regulation of ACKR2 from endosomal compartment to cell membrane, increasing its efficiency in chemokine uptake and degradation. Involved in the internalization of the atypical chemokine receptor ACKR3. Negatively regulates the NOTCH signaling pathway by mediating the ubiquitination and degradation of NOTCH1 by ITCH. Participates in the recruitment of the ubiquitin-protein ligase to the receptor. In Rattus norvegicus (Rat), this protein is Beta-arrestin-1.